The sequence spans 407 residues: MKAREVEFEGHLIDSMIFTKALDIILDLDGEFEILEFRVGKKKDDPSYARMIVFGRDDAHLEQILKELHKIGARIPDIEEVELAEAPADKVLPDGFYVTTNHPTFVRYGGEWLPVEDISMDRVIVIRDGRAYCIPIDEVVRGDRVVVGEKGVRVVPPERPRKSTVFEFMGGRVSSERPTERMIEAIAREIYELKLKGGKIAVVAGPAVDHTSARNALAALIRDGYVDLLLSGNALAVHDIEISIFGTSLGMDICKGRPVPGGNRHHLYTISKVIAAGGIKKAIEKGIIKDGIMYECVKNNVPFILAGSIRDDGPLPEVITDVMVAKKKMKEALRGINMVIMLATMLHSIAVGNLLPSYVKTICVDMNPSTVTKLMDRGTHQAIGVVTDVGLFLPLLYLKIKEIEAKE.

NAD(+)-binding residues include Asn233, Ala234, Asp312, Thr344, Met345, Leu346, His347, Asp365, Asp388, and Val389.

It belongs to the AgrE/ArgZ ornithine cyclodeaminase family. The cofactor is NAD(+).

It carries out the reaction L-ornithine = L-proline + NH4(+). In terms of biological role, catalyzes the conversion of ornithine to proline, with the release of ammonia. The chain is Ornithine cyclodeaminase from Archaeoglobus fulgidus (strain ATCC 49558 / DSM 4304 / JCM 9628 / NBRC 100126 / VC-16).